The sequence spans 37 residues: Large ribosomal subunit protein bL36c (37 aa).

It belongs to the bacterial ribosomal protein bL36 family.

Its subcellular location is the plastid. The protein localises to the chloroplast. This is Large ribosomal subunit protein bL36c from Piper cenocladum (Ant piper).